A 550-amino-acid polypeptide reads, in one-letter code: Membrane protein insertase YidC (550 aa).

Residues 3–23 form a helical membrane-spanning segment; that stretch reads IKRTVLWVIFFMSAVMLFDNW. The disordered stretch occupies residues 34–73; it reads FPSATQTKTAAPAAPGSSTTASQPTDLPQTTAAAPGSTTP. A compositionally biased stretch (low complexity) spans 35-73; that stretch reads PSATQTKTAAPAAPGSSTTASQPTDLPQTTAAAPGSTTP. Transmembrane regions (helical) follow at residues 363–383, 429–449, 472–492, and 503–523; these read WGWA…PLSA, FGGC…YWVL, PYFI…KLNP, and MMFM…GLVL.

It belongs to the OXA1/ALB3/YidC family. Type 1 subfamily. Interacts with the Sec translocase complex via SecD. Specifically interacts with transmembrane segments of nascent integral membrane proteins during membrane integration.

The protein localises to the cell inner membrane. In terms of biological role, required for the insertion and/or proper folding and/or complex formation of integral membrane proteins into the membrane. Involved in integration of membrane proteins that insert both dependently and independently of the Sec translocase complex, as well as at least some lipoproteins. Aids folding of multispanning membrane proteins. The protein is Membrane protein insertase YidC of Paraburkholderia phymatum (strain DSM 17167 / CIP 108236 / LMG 21445 / STM815) (Burkholderia phymatum).